The sequence spans 428 residues: Glutamate-1-semialdehyde 2,1-aminomutase (428 aa).

Residue K267 is modified to N6-(pyridoxal phosphate)lysine.

It belongs to the class-III pyridoxal-phosphate-dependent aminotransferase family. HemL subfamily. In terms of assembly, homodimer. Pyridoxal 5'-phosphate serves as cofactor.

The protein localises to the cytoplasm. The catalysed reaction is (S)-4-amino-5-oxopentanoate = 5-aminolevulinate. The protein operates within porphyrin-containing compound metabolism; protoporphyrin-IX biosynthesis; 5-aminolevulinate from L-glutamyl-tRNA(Glu): step 2/2. It functions in the pathway porphyrin-containing compound metabolism; chlorophyll biosynthesis. The chain is Glutamate-1-semialdehyde 2,1-aminomutase from Prochlorococcus marinus (strain NATL1A).